The chain runs to 339 residues: Phenylalanine--tRNA ligase alpha subunit (339 aa).

Glu-247 is a Mg(2+) binding site.

The protein belongs to the class-II aminoacyl-tRNA synthetase family. Phe-tRNA synthetase alpha subunit type 1 subfamily. Tetramer of two alpha and two beta subunits. Mg(2+) is required as a cofactor.

Its subcellular location is the cytoplasm. The enzyme catalyses tRNA(Phe) + L-phenylalanine + ATP = L-phenylalanyl-tRNA(Phe) + AMP + diphosphate + H(+). This chain is Phenylalanine--tRNA ligase alpha subunit (pheS), found in Deinococcus radiodurans (strain ATCC 13939 / DSM 20539 / JCM 16871 / CCUG 27074 / LMG 4051 / NBRC 15346 / NCIMB 9279 / VKM B-1422 / R1).